The following is a 362-amino-acid chain: Metacaspase-3 (362 aa).

Active-site residues include H174 and C230.

It belongs to the peptidase C14B family.

This chain is Metacaspase-3 (AMC3), found in Arabidopsis thaliana (Mouse-ear cress).